A 291-amino-acid chain; its full sequence is Ribosomal RNA small subunit methyltransferase I (291 aa).

The protein belongs to the methyltransferase superfamily. RsmI family.

It is found in the cytoplasm. The enzyme catalyses cytidine(1402) in 16S rRNA + S-adenosyl-L-methionine = 2'-O-methylcytidine(1402) in 16S rRNA + S-adenosyl-L-homocysteine + H(+). Functionally, catalyzes the 2'-O-methylation of the ribose of cytidine 1402 (C1402) in 16S rRNA. The polypeptide is Ribosomal RNA small subunit methyltransferase I (Neisseria meningitidis serogroup B (strain ATCC BAA-335 / MC58)).